A 218-amino-acid polypeptide reads, in one-letter code: Octanoyltransferase (218 aa).

The BPL/LPL catalytic domain occupies 32 to 218; sequence GEAAEAIWLL…LRTFPQHFPD (187 aa). Substrate-binding positions include 71–78, 151–153, and 164–166; these read RGGQYTYH, AIG, and GLS. Cys182 (acyl-thioester intermediate) is an active-site residue.

Belongs to the LipB family.

It is found in the cytoplasm. It catalyses the reaction octanoyl-[ACP] + L-lysyl-[protein] = N(6)-octanoyl-L-lysyl-[protein] + holo-[ACP] + H(+). The protein operates within protein modification; protein lipoylation via endogenous pathway; protein N(6)-(lipoyl)lysine from octanoyl-[acyl-carrier-protein]: step 1/2. Catalyzes the transfer of endogenously produced octanoic acid from octanoyl-acyl-carrier-protein onto the lipoyl domains of lipoate-dependent enzymes. Lipoyl-ACP can also act as a substrate although octanoyl-ACP is likely to be the physiological substrate. The protein is Octanoyltransferase of Cereibacter sphaeroides (strain ATCC 17029 / ATH 2.4.9) (Rhodobacter sphaeroides).